The sequence spans 445 residues: MDIQNIKETIAMIEEQNFDIRTITMGISLLDCIDADIDKTAEKIYQKIVNKAGKLVEVGNEIGHELGIKIVNKRVSVTPIAIIGAATAADDYTPLALAMDRAAKEIGIDFIGGYSALVQKGYQKGDEILIKSMPKALAATERVCASVNVGSTKSGINMTAVRDMGETIKIMSKGDKWLNAKLVVFANAVEDNPFMAGAFHGVGEADTIINVGVSGPGVVKRALEKVRGESFDILAETIKKTAFKITRIGQLVGQMASERLNVEFGIVDLSLAPTPAIGDSVARVLEEMGLETVGTHGTTAALAMLNDAVKKGGVMAAERVGGLSGAFIPVSEDEGMIAAVNSGALNIEKLEAMTCVCSVGLDMIAIPEETPASTIAAMIADEAAIGVINQKTTAVRIIPMGKEGEQIEFGGLFGVAPVMRVNKASSADFIARGGQIPAPIHSFKN.

It belongs to the UPF0210 family. In terms of assembly, homodimer.

The sequence is that of UPF0210 protein llmg_1581 from Lactococcus lactis subsp. cremoris (strain MG1363).